Reading from the N-terminus, the 681-residue chain is UvrABC system protein C (681 aa).

The interval 1-23 (MNGKKLPDGGILFDETDDEDDDA) is disordered. Positions 14–23 (DETDDEDDDA) are enriched in acidic residues. Positions 67–145 (NSPGVYRMFN…IKRLRPRFNV (79 aa)) constitute a GIY-YIG domain. In terms of domain architecture, UVR spans 255 to 290 (QAVKTAIARQMNEASEDLDFERAAIYRDRLAALSHV).

Belongs to the UvrC family. Interacts with UvrB in an incision complex.

Its subcellular location is the cytoplasm. The UvrABC repair system catalyzes the recognition and processing of DNA lesions. UvrC both incises the 5' and 3' sides of the lesion. The N-terminal half is responsible for the 3' incision and the C-terminal half is responsible for the 5' incision. In Agrobacterium fabrum (strain C58 / ATCC 33970) (Agrobacterium tumefaciens (strain C58)), this protein is UvrABC system protein C.